Reading from the N-terminus, the 260-residue chain is Triosephosphate isomerase (260 aa).

11 to 13 (NWK) contributes to the substrate binding site. The Electrophile role is filled by histidine 103. Residue glutamate 175 is the Proton acceptor of the active site. Residues glycine 181, serine 220, and 241–242 (GG) each bind substrate.

The protein belongs to the triosephosphate isomerase family. As to quaternary structure, homodimer.

Its subcellular location is the cytoplasm. It carries out the reaction D-glyceraldehyde 3-phosphate = dihydroxyacetone phosphate. The protein operates within carbohydrate biosynthesis; gluconeogenesis. It participates in carbohydrate degradation; glycolysis; D-glyceraldehyde 3-phosphate from glycerone phosphate: step 1/1. Its function is as follows. Involved in the gluconeogenesis. Catalyzes stereospecifically the conversion of dihydroxyacetone phosphate (DHAP) to D-glyceraldehyde-3-phosphate (G3P). In Shewanella pealeana (strain ATCC 700345 / ANG-SQ1), this protein is Triosephosphate isomerase.